The chain runs to 197 residues: Probable 26S proteasome non-ATPase regulatory subunit 9 (197 aa).

Positions 75–166 constitute a PDZ domain; the sequence is KIVVEMENEN…KIIRVTVIRE (92 aa).

It belongs to the proteasome subunit p27 family.

Functionally, acts as a chaperone during the assembly of the 26S proteasome, specifically of the base subcomplex of the 19S regulatory complex (RC). In Caenorhabditis elegans, this protein is Probable 26S proteasome non-ATPase regulatory subunit 9 (psmd-9).